The sequence spans 393 residues: MAELRQVPGGRETPQGELRPEVVEDEVPRSPVAEEPGGGGSSSSEAKLSPREEEELDPRIQEELEHLNQASEEINQVELQLDEARTTYRRILQESARKLNTQGSHLGSCIEKARPYYEARRLAKEAQQETQKAALRYERAVSMHNAAREMVLVAEQGVMADKNRLDPTWQEMLNHATCKVNEAEEERLRGEREHQRVTRLCQQAEARVQALQKTLRRAIGKSRPYFELKAQFSQILEEHKAKVTELEQQVAQAKTRYSVALRNLEQISEQIHARRRGDLPPHPLGPRRSSPVGAEAGPEDTGDGDSGIEGAEGAGLEEGSSLGPGPAPDTDTLSLLSLRTVASDLQKCDSVEHLRGLSDHVSLDGQELGTRSGGRRGSDGGVRGGRHQRSVSL.

Disordered stretches follow at residues methionine 1 to arginine 59 and histidine 272 to threonine 332. At threonine 13 the chain carries Phosphothreonine. Basic and acidic residues predominate over residues leucine 18–proline 28. Residues serine 30 and serine 49 each carry the phosphoserine modification. 2 coiled-coil regions span residues arginine 59–alanine 140 and tryptophan 169–histidine 272. Residues glycine 304–glycine 313 show a composition bias toward gly residues. Low complexity predominate over residues glutamate 317–threonine 332. Serine 343, serine 350, serine 358, serine 362, and serine 378 each carry phosphoserine. The interval aspartate 364–leucine 393 is disordered. Positions glycine 384–leucine 393 are enriched in basic residues.

It belongs to the SH3BP5 family.

In terms of biological role, functions as a guanine nucleotide exchange factor (GEF) for RAB11A. This is SH3 domain-binding protein 5-like (SH3BP5L) from Pongo abelii (Sumatran orangutan).